Here is a 520-residue protein sequence, read N- to C-terminus: ATP synthase subunit alpha 2 (520 aa).

An ATP-binding site is contributed by 176–183 (GDRQTGKT).

The protein belongs to the ATPase alpha/beta chains family. In terms of assembly, F-type ATPases have 2 components, CF(1) - the catalytic core - and CF(0) - the membrane proton channel. CF(1) has five subunits: alpha(3), beta(3), gamma(1), delta(1), epsilon(1). CF(0) has three main subunits: a(1), b(2) and c(9-12). The alpha and beta chains form an alternating ring which encloses part of the gamma chain. CF(1) is attached to CF(0) by a central stalk formed by the gamma and epsilon chains, while a peripheral stalk is formed by the delta and b chains.

It localises to the cell inner membrane. It catalyses the reaction ATP + H2O + 4 H(+)(in) = ADP + phosphate + 5 H(+)(out). Its function is as follows. Produces ATP from ADP in the presence of a proton gradient across the membrane. The alpha chain is a regulatory subunit. The polypeptide is ATP synthase subunit alpha 2 (Polaromonas naphthalenivorans (strain CJ2)).